The primary structure comprises 30 residues: Diuretic hormone 2 (30 aa).

Val30 is subject to Valine amide.

This sequence belongs to the sauvagine/corticotropin-releasing factor/urotensin I family.

The protein localises to the secreted. Regulation of fluid secretion. This chain is Diuretic hormone 2, found in Manduca sexta (Tobacco hawkmoth).